The chain runs to 287 residues: Ribosomal RNA small subunit methyltransferase A (287 aa).

S-adenosyl-L-methionine is bound by residues asparagine 28, leucine 30, glycine 55, glutamate 77, aspartate 103, and asparagine 123.

It belongs to the class I-like SAM-binding methyltransferase superfamily. rRNA adenine N(6)-methyltransferase family. RsmA subfamily.

It is found in the cytoplasm. The enzyme catalyses adenosine(1518)/adenosine(1519) in 16S rRNA + 4 S-adenosyl-L-methionine = N(6)-dimethyladenosine(1518)/N(6)-dimethyladenosine(1519) in 16S rRNA + 4 S-adenosyl-L-homocysteine + 4 H(+). In terms of biological role, specifically dimethylates two adjacent adenosines (A1518 and A1519) in the loop of a conserved hairpin near the 3'-end of 16S rRNA in the 30S particle. May play a critical role in biogenesis of 30S subunits. This Rhodopseudomonas palustris (strain BisB5) protein is Ribosomal RNA small subunit methyltransferase A.